We begin with the raw amino-acid sequence, 155 residues long: Large ribosomal subunit protein uL13 (155 aa).

Belongs to the universal ribosomal protein uL13 family. In terms of assembly, part of the 50S ribosomal subunit.

Functionally, this protein is one of the early assembly proteins of the 50S ribosomal subunit, although it is not seen to bind rRNA by itself. It is important during the early stages of 50S assembly. This is Large ribosomal subunit protein uL13 from Rickettsia felis (strain ATCC VR-1525 / URRWXCal2) (Rickettsia azadi).